The chain runs to 185 residues: Crossover junction endodeoxyribonuclease RuvC (185 aa).

Catalysis depends on residues Asp-7, Glu-66, and Asp-137. 3 residues coordinate Mg(2+): Asp-7, Glu-66, and Asp-137.

This sequence belongs to the RuvC family. Homodimer which binds Holliday junction (HJ) DNA. The HJ becomes 2-fold symmetrical on binding to RuvC with unstacked arms; it has a different conformation from HJ DNA in complex with RuvA. In the full resolvosome a probable DNA-RuvA(4)-RuvB(12)-RuvC(2) complex forms which resolves the HJ. Mg(2+) serves as cofactor.

It is found in the cytoplasm. It carries out the reaction Endonucleolytic cleavage at a junction such as a reciprocal single-stranded crossover between two homologous DNA duplexes (Holliday junction).. Functionally, the RuvA-RuvB-RuvC complex processes Holliday junction (HJ) DNA during genetic recombination and DNA repair. Endonuclease that resolves HJ intermediates. Cleaves cruciform DNA by making single-stranded nicks across the HJ at symmetrical positions within the homologous arms, yielding a 5'-phosphate and a 3'-hydroxyl group; requires a central core of homology in the junction. The consensus cleavage sequence is 5'-(A/T)TT(C/G)-3'. Cleavage occurs on the 3'-side of the TT dinucleotide at the point of strand exchange. HJ branch migration catalyzed by RuvA-RuvB allows RuvC to scan DNA until it finds its consensus sequence, where it cleaves and resolves the cruciform DNA. The chain is Crossover junction endodeoxyribonuclease RuvC from Anaeromyxobacter sp. (strain K).